Consider the following 184-residue polypeptide: MGSLLMERNFMVEDTFTNGKLSKKEKILFLIKFYIIFLVVFFILSYFGKYLIGIVTYLSYIFTKIIISDARLADNFIYLPNNTVEVVEECTGSFLIAGLLALIIVYSKNIKEFIIGIFFVLLAFFVNIFRIVLICYLVNMHPESSYLYHEIAGYGVILTLVPVLVIGYLKIIEKYRHSSNKSHL.

4 consecutive transmembrane segments (helical) span residues 27–47 (ILFL…LSYF), 86–106 (VVEE…IIVY), 114–134 (IIGI…IVLI), and 151–171 (IAGY…YLKI). Catalysis depends on C90, which acts as the Acyl-thioester intermediate. R130 (proton donor) is an active-site residue.

Belongs to the exosortase/archaeosortase family. Archaeosortase E subfamily.

Its subcellular location is the cell membrane. Transpeptidase that recognizes and modifies its substrate by proteolytic cleavage of a sorting signal. Following cleavage, a covalent intermediate is formed via a thioester bond between the archaeosortase and its substrate, which is then transferred and covalently attached to the cell membrane. The chain is Probable archaeosortase E from Methanocaldococcus jannaschii (strain ATCC 43067 / DSM 2661 / JAL-1 / JCM 10045 / NBRC 100440) (Methanococcus jannaschii).